The primary structure comprises 96 residues: ATP synthase subunit c (96 aa).

Helical transmembrane passes span 24 to 44 (HVGA…VGVG) and 75 to 95 (AIAE…IFVA).

This sequence belongs to the ATPase C chain family. As to quaternary structure, F-type ATPases have 2 components, F(1) - the catalytic core - and F(0) - the membrane proton channel. F(1) has five subunits: alpha(3), beta(3), gamma(1), delta(1), epsilon(1). F(0) has three main subunits: a(1), b(2) and c(10-14). The alpha and beta chains form an alternating ring which encloses part of the gamma chain. F(1) is attached to F(0) by a central stalk formed by the gamma and epsilon chains, while a peripheral stalk is formed by the delta and b chains.

It localises to the cell membrane. Functionally, f(1)F(0) ATP synthase produces ATP from ADP in the presence of a proton or sodium gradient. F-type ATPases consist of two structural domains, F(1) containing the extramembraneous catalytic core and F(0) containing the membrane proton channel, linked together by a central stalk and a peripheral stalk. During catalysis, ATP synthesis in the catalytic domain of F(1) is coupled via a rotary mechanism of the central stalk subunits to proton translocation. Its function is as follows. Key component of the F(0) channel; it plays a direct role in translocation across the membrane. A homomeric c-ring of between 10-14 subunits forms the central stalk rotor element with the F(1) delta and epsilon subunits. The sequence is that of ATP synthase subunit c from Mycoplasmoides gallisepticum (strain R(low / passage 15 / clone 2)) (Mycoplasma gallisepticum).